A 454-amino-acid chain; its full sequence is Retinoblastoma-binding protein homolog 5 (454 aa).

WD repeat units lie at residues 23–64 (LQNA…RTFS), 65–104 (AHCL…LLHR), 153–192 (SSDE…CVAW), 196–235 (NTVQ…HQRG), 248–288 (VNKA…LIKI), and 292–330 (NKGE…NWSA).

As to quaternary structure, component of the SET2 complex (also known as the SET1/COMPASS complex), which contains at least set-2, swd-2.1, cfp-1, rbbp-5, wdr-5.1, dpy-30 and ash-2.

Its subcellular location is the nucleus. Required for di- and trimethylation at 'Lys-4' of histone H3. Regulates left/right asymmetry of ASE sensory neurons, via its role as a component of the SET2 complex. The polypeptide is Retinoblastoma-binding protein homolog 5 (rbbp-5) (Caenorhabditis elegans).